We begin with the raw amino-acid sequence, 50 residues long: Protein hunchback (50 aa).

C2H2-type zinc fingers lie at residues H1–H5, I11–H33, and Y39–Y50.

It belongs to the hunchback C2H2-type zinc-finger protein family.

Its subcellular location is the nucleus. Its function is as follows. Gap class segmentation protein that controls development of head structures. This chain is Protein hunchback (hb), found in Bradysia coprophila (Dark-winged fungus gnat).